The primary structure comprises 568 residues: Oxygen-dependent choline dehydrogenase (568 aa).

Residue 8–37 (DYVIIGGGSAGSVLGNRLTEDKDKEVLVLE) coordinates FAD. The active-site Proton acceptor is the His-473.

The protein belongs to the GMC oxidoreductase family. Requires FAD as cofactor.

The enzyme catalyses choline + A = betaine aldehyde + AH2. It carries out the reaction betaine aldehyde + NAD(+) + H2O = glycine betaine + NADH + 2 H(+). The protein operates within amine and polyamine biosynthesis; betaine biosynthesis via choline pathway; betaine aldehyde from choline (cytochrome c reductase route): step 1/1. In terms of biological role, involved in the biosynthesis of the osmoprotectant glycine betaine. Catalyzes the oxidation of choline to betaine aldehyde and betaine aldehyde to glycine betaine at the same rate. This Staphylococcus haemolyticus (strain JCSC1435) protein is Oxygen-dependent choline dehydrogenase.